The chain runs to 283 residues: Probable endonuclease 4 (283 aa).

Zn(2+) is bound by residues histidine 69, histidine 109, glutamate 145, aspartate 179, histidine 182, histidine 216, aspartate 229, histidine 231, and glutamate 261.

Belongs to the AP endonuclease 2 family. Zn(2+) serves as cofactor.

The enzyme catalyses Endonucleolytic cleavage to 5'-phosphooligonucleotide end-products.. Functionally, endonuclease IV plays a role in DNA repair. It cleaves phosphodiester bonds at apurinic or apyrimidinic (AP) sites, generating a 3'-hydroxyl group and a 5'-terminal sugar phosphate. This Campylobacter concisus (strain 13826) protein is Probable endonuclease 4.